The following is a 129-amino-acid chain: Small ribosomal subunit protein uS8 (129 aa).

Belongs to the universal ribosomal protein uS8 family. As to quaternary structure, part of the 30S ribosomal subunit.

One of the primary rRNA binding proteins, it binds directly to 16S rRNA central domain where it helps coordinate assembly of the platform of the 30S subunit. The polypeptide is Small ribosomal subunit protein uS8 (Methanothrix thermoacetophila (strain DSM 6194 / JCM 14653 / NBRC 101360 / PT) (Methanosaeta thermophila)).